The primary structure comprises 121 residues: Large ribosomal subunit protein bL12 (121 aa).

The protein belongs to the bacterial ribosomal protein bL12 family. Homodimer. Part of the ribosomal stalk of the 50S ribosomal subunit. Forms a multimeric L10(L12)X complex, where L10 forms an elongated spine to which 2 to 4 L12 dimers bind in a sequential fashion. Binds GTP-bound translation factors.

Forms part of the ribosomal stalk which helps the ribosome interact with GTP-bound translation factors. Is thus essential for accurate translation. The protein is Large ribosomal subunit protein bL12 of Vibrio cholerae serotype O1 (strain ATCC 39541 / Classical Ogawa 395 / O395).